Consider the following 248-residue polypeptide: MYKLVLVRHGESEWNKENLFTGWTDVKLSDKGINEALEAGLLLKQEGYSFDIAFSSLLSRANDTLNIILRELGQSYISVKKTWRLNERHYGALQGLNKSETAAKYGEGKVLIWRRSYDVPPMSLDESEDRHPIKDPRYKYIPKRELPSTECLKDTVTRVIPYWTDEIAKEVLGGKKVIVAAHGNSLRALVKYLDNLSEEDVLKLNIPTGIPLVYELDKDLNPIKHYYLGDESKIKSAMESVASQGKLK.

Substrate contacts are provided by residues 8–15, 21–22, Arg60, 87–90, Lys98, 114–115, and 183–184; these read RHGESEWN, TG, ERHY, RR, and GN. Residue His9 is the Tele-phosphohistidine intermediate of the active site. The Proton donor/acceptor role is filled by Glu87.

Belongs to the phosphoglycerate mutase family. BPG-dependent PGAM subfamily.

The catalysed reaction is (2R)-2-phosphoglycerate = (2R)-3-phosphoglycerate. The protein operates within carbohydrate degradation; glycolysis; pyruvate from D-glyceraldehyde 3-phosphate: step 3/5. In terms of biological role, catalyzes the interconversion of 2-phosphoglycerate and 3-phosphoglycerate. This is 2,3-bisphosphoglycerate-dependent phosphoglycerate mutase from Borrelia garinii subsp. bavariensis (strain ATCC BAA-2496 / DSM 23469 / PBi) (Borreliella bavariensis).